Reading from the N-terminus, the 192-residue chain is Anthranilate synthase component 2 (192 aa).

The Glutamine amidotransferase type-1 domain maps to 3 to 192; that stretch reads NILLLDNIDS…LQRVIQWTKI (190 aa). L-glutamine is bound at residue 57–59; sequence GPG. The active-site Nucleophile; for GATase activity is the Cys-84. Residues Gln-88 and 134-135 contribute to the L-glutamine site; that span reads SL. Catalysis depends on for GATase activity residues His-170 and Glu-172.

In terms of assembly, heterotetramer consisting of two non-identical subunits: a beta subunit (TrpG) and a large alpha subunit (TrpE).

The catalysed reaction is chorismate + L-glutamine = anthranilate + pyruvate + L-glutamate + H(+). It functions in the pathway amino-acid biosynthesis; L-tryptophan biosynthesis; L-tryptophan from chorismate: step 1/5. Functionally, part of a heterotetrameric complex that catalyzes the two-step biosynthesis of anthranilate, an intermediate in the biosynthesis of L-tryptophan. In the first step, the glutamine-binding beta subunit (TrpG) of anthranilate synthase (AS) provides the glutamine amidotransferase activity which generates ammonia as a substrate that, along with chorismate, is used in the second step, catalyzed by the large alpha subunit of AS (TrpE) to produce anthranilate. In the absence of TrpG, TrpE can synthesize anthranilate directly from chorismate and high concentrations of ammonia. The protein is Anthranilate synthase component 2 (trpG) of Buchnera aphidicola subsp. Baizongia pistaciae (strain Bp).